Here is a 443-residue protein sequence, read N- to C-terminus: Tol-Pal system protein TolB (443 aa).

The signal sequence occupies residues 1 to 33 (MKIGIINTKIRTVFSAFACMIAASLVCTMPARA).

This sequence belongs to the TolB family. In terms of assembly, the Tol-Pal system is composed of five core proteins: the inner membrane proteins TolA, TolQ and TolR, the periplasmic protein TolB and the outer membrane protein Pal. They form a network linking the inner and outer membranes and the peptidoglycan layer.

The protein localises to the periplasm. Its function is as follows. Part of the Tol-Pal system, which plays a role in outer membrane invagination during cell division and is important for maintaining outer membrane integrity. The chain is Tol-Pal system protein TolB from Brucella anthropi (strain ATCC 49188 / DSM 6882 / CCUG 24695 / JCM 21032 / LMG 3331 / NBRC 15819 / NCTC 12168 / Alc 37) (Ochrobactrum anthropi).